Here is a 390-residue protein sequence, read N- to C-terminus: Phosphoprotein (390 aa).

A phosphothreonine mark is found at Thr-10 and Thr-16. The segment covering 54–65 has biased composition (polar residues); sequence QKNIQHPTASHQ. Disordered stretches follow at residues 54-98 and 144-183; these read QKNI…EPLF and RTST…KERS. Phosphoserine is present on Ser-69. Thr-91, Thr-150, and Thr-164 each carry phosphothreonine. Ser-187 carries the phosphoserine modification. Residue Thr-249 is modified to Phosphothreonine. The residue at position 256 (Ser-256) is a Phosphoserine. Phosphothreonine occurs at positions 257 and 281. A phosphoserine mark is found at Ser-291 and Ser-293. Thr-297 carries the phosphothreonine modification. A phosphoserine mark is found at Ser-300 and Ser-373. Residues 342 to 390 form an interaction with the nucleoprotein region; the sequence is AGRKVMITKMITDCVANPQMKQAFEQRLAKASTEDALNDIKKDIIRSAI. Thr-374 is modified (phosphothreonine).

The protein belongs to the rubulavirus/avulavirus P protein family. Homotetramer. Interacts (via multimerization domain) with polymerase L; this interaction forms the polymerase L-P complex. Interacts (via N-terminus) with N0 (via Ncore); this interaction allows P to chaperon N0 to avoid N polymerization before encapsidation. Interacts (via C-terminus) with N-RNA template; this interaction positions the polymerase on the template for both transcription and replication. Interacts with host RPS6KB1 kinase; this interaction may play a role in the viral replication and transcription.

In terms of biological role, essential cofactor of the RNA polymerase L that plays a central role in the transcription and replication by forming the polymerase complex with RNA polymerase L and recruiting L to the genomic N-RNA template for RNA synthesis. Also plays a central role in the encapsidation of nascent RNA chains by forming the encapsidation complex with the nucleocapsid protein N (N-P complex). Acts as a chaperone for newly synthesized free N protein, so-called N0, allowing encapsidation of nascent RNA chains during replication. The nucleoprotein protein N prevents excessive phosphorylation of P, which leads to down-regulation of viral transcription/ replication. Participates, together with N, in the formation of viral factories (viroplasms), which are large inclusions in the host cytoplasm where replication takes place. This is Phosphoprotein (P/V) from Homo sapiens (Human).